The chain runs to 422 residues: MAFIALGINHKTASVAVRERVAFTPEQMVEALQQLCRLTTSREAAILSTCNRSELYLEIDHPTADDVLAWLADYHRLTLDELRACAYVHQDEDAVRHMMRVASGLDSMVLGEPQILGQMKSAYAVAREAGTVGPLLGRLFQATFSTAKTVRTDTAIGENPVSVAFAAVSLAKQIFSDLHRSQALLIGAGETITLVARHLFEQGVKRIVVANRTLERASLLAEQFGAHAVLLSEIPEELANSDIVISSTASQLPILGKGAVERALKQRKHKPMFMVDIAVPRDIEPEVGELDDVYLYSVDDLHEVVAENLKSRQGAAQAAEELVGSGVTEFMQRLRELAAVDVLRAYRQQAERLRDDELGKAQRQLANGADPAEVLAQLARGLTNKLLHAPSVQMKKMSAEGRIDALALAQELFALDEGAPRH.

Residues 49–52, Ser-107, 112–114, and Gln-118 each bind substrate; these read TCNR and EPQ. The active-site Nucleophile is Cys-50. 187–192 is an NADP(+) binding site; sequence GAGETI.

It belongs to the glutamyl-tRNA reductase family. In terms of assembly, homodimer.

It carries out the reaction (S)-4-amino-5-oxopentanoate + tRNA(Glu) + NADP(+) = L-glutamyl-tRNA(Glu) + NADPH + H(+). It functions in the pathway porphyrin-containing compound metabolism; protoporphyrin-IX biosynthesis; 5-aminolevulinate from L-glutamyl-tRNA(Glu): step 1/2. Catalyzes the NADPH-dependent reduction of glutamyl-tRNA(Glu) to glutamate 1-semialdehyde (GSA). The protein is Glutamyl-tRNA reductase of Pseudomonas paraeruginosa (strain DSM 24068 / PA7) (Pseudomonas aeruginosa (strain PA7)).